A 166-amino-acid chain; its full sequence is uncharacterized protein (166 aa).

4Fe-4S ferredoxin-type domains are found at residues 3 to 33 (MKKI…GRIA), 37 to 67 (KDGK…EHKD), and 68 to 97 (GYVY…MEDK). [4Fe-4S] cluster contacts are provided by Cys-13, Cys-16, Cys-19, Cys-23, Cys-46, Cys-49, Cys-54, Cys-58, Cys-77, Cys-80, Cys-83, Cys-87, Cys-101, Cys-104, Cys-111, and Cys-115.

It depends on [4Fe-4S] cluster as a cofactor.

This is an uncharacterized protein from Methanocaldococcus jannaschii (strain ATCC 43067 / DSM 2661 / JAL-1 / JCM 10045 / NBRC 100440) (Methanococcus jannaschii).